The chain runs to 59 residues: Conotoxin Bu1.2 (59 aa).

An N-terminal signal peptide occupies residues 1 to 16 (MFTVFLLVVLATTVVS). Positions 17–42 (FSTDDESDGSNEEPSADQAARSAMNR) are excised as a propeptide. The segment at 18-43 (STDDESDGSNEEPSADQAARSAMNRP) is disordered. Positions 19 to 31 (TDDESDGSNEEPS) are enriched in acidic residues. Intrachain disulfides connect C46/C52 and C47/C57. The residue at position 58 (G58) is a Glycine amide.

Belongs to the conotoxin A superfamily. In terms of tissue distribution, expressed by the venom duct.

It is found in the secreted. The protein is Conotoxin Bu1.2 of Conus bullatus (Bubble cone).